Reading from the N-terminus, the 115-residue chain is NADH-ubiquinone oxidoreductase chain 3 (115 aa).

Helical transmembrane passes span 3 to 23 (LMLA…IMFW), 55 to 75 (FFLV…LLSL), and 84 to 104 (LPTM…SLAY).

This sequence belongs to the complex I subunit 3 family. Core subunit of respiratory chain NADH dehydrogenase (Complex I) which is composed of 45 different subunits. Interacts with TMEM186. Interacts with TMEM242.

It is found in the mitochondrion inner membrane. It carries out the reaction a ubiquinone + NADH + 5 H(+)(in) = a ubiquinol + NAD(+) + 4 H(+)(out). In terms of biological role, core subunit of the mitochondrial membrane respiratory chain NADH dehydrogenase (Complex I) which catalyzes electron transfer from NADH through the respiratory chain, using ubiquinone as an electron acceptor. Essential for the catalytic activity of complex I. This chain is NADH-ubiquinone oxidoreductase chain 3, found in Papio hamadryas (Hamadryas baboon).